A 329-amino-acid chain; its full sequence is Beta-tectorin (329 aa).

An N-terminal signal peptide occupies residues 1–17 (MVVRAFVLLALFAEASA). Positions 19–283 (SCTPNKADVI…LSCPVNCDKR (265 aa)) constitute a ZP domain. N-linked (GlcNAc...) asparagine glycans are attached at residues N80, N104, N116, and N145. An intrachain disulfide couples C204 to C264. A305 carries GPI-anchor amidated alanine lipidation. The propeptide at 306–329 (FSGLCDFSDVLLHLILMLGTWAVL) is removed in mature form.

In terms of assembly, may form homomeric filament after self-association or heteromeric filament after association with alpha-tectorin. Interacts with CEACAM16. Post-translationally, the presence of a hydrophobic C-terminus preceded by a potential cleavage site strongly suggests that tectorins are synthesized as glycosylphosphatidylinositol-linked, membrane-bound precursors. Tectorins are targeted to the apical surface of the inner ear epithelia by the lipid and proteolytically released into the extracellular compartment.

The protein localises to the cell membrane. It is found in the secreted. The protein resides in the extracellular space. Its subcellular location is the extracellular matrix. Its function is as follows. One of the major non-collagenous components of the tectorial membrane. The tectorial membrane is an extracellular matrix of the inner ear that covers the neuroepithelium of the cochlea and contacts the stereocilia bundles of specialized sensory hair cells. Sound induces movement of these hair cells relative to the tectorial membrane, deflects the stereocilia and leads to fluctuations in hair-cell membrane potential, transducing sound into electrical signals. The sequence is that of Beta-tectorin (Tectb) from Mus musculus (Mouse).